The chain runs to 373 residues: S-adenosylmethionine:tRNA ribosyltransferase-isomerase (373 aa).

The protein belongs to the QueA family. In terms of assembly, monomer.

The protein resides in the cytoplasm. It catalyses the reaction 7-aminomethyl-7-carbaguanosine(34) in tRNA + S-adenosyl-L-methionine = epoxyqueuosine(34) in tRNA + adenine + L-methionine + 2 H(+). It functions in the pathway tRNA modification; tRNA-queuosine biosynthesis. Its function is as follows. Transfers and isomerizes the ribose moiety from AdoMet to the 7-aminomethyl group of 7-deazaguanine (preQ1-tRNA) to give epoxyqueuosine (oQ-tRNA). This is S-adenosylmethionine:tRNA ribosyltransferase-isomerase from Caulobacter sp. (strain K31).